We begin with the raw amino-acid sequence, 237 residues long: tRNA (guanine-N(7)-)-methyltransferase (237 aa).

Residues Glu-56, Glu-81, Asp-108, and Asp-131 each contribute to the S-adenosyl-L-methionine site. The active site involves Asp-131. Substrate contacts are provided by residues Lys-135, Asp-167, and 204-207; that span reads TKFE.

The protein belongs to the class I-like SAM-binding methyltransferase superfamily. TrmB family.

It catalyses the reaction guanosine(46) in tRNA + S-adenosyl-L-methionine = N(7)-methylguanosine(46) in tRNA + S-adenosyl-L-homocysteine. The protein operates within tRNA modification; N(7)-methylguanine-tRNA biosynthesis. Catalyzes the formation of N(7)-methylguanine at position 46 (m7G46) in tRNA. This Legionella pneumophila (strain Paris) protein is tRNA (guanine-N(7)-)-methyltransferase.